The sequence spans 122 residues: Ribonuclease P protein component (122 aa).

This sequence belongs to the RnpA family. In terms of assembly, consists of a catalytic RNA component (M1 or rnpB) and a protein subunit.

The enzyme catalyses Endonucleolytic cleavage of RNA, removing 5'-extranucleotides from tRNA precursor.. RNaseP catalyzes the removal of the 5'-leader sequence from pre-tRNA to produce the mature 5'-terminus. It can also cleave other RNA substrates such as 4.5S RNA. The protein component plays an auxiliary but essential role in vivo by binding to the 5'-leader sequence and broadening the substrate specificity of the ribozyme. The protein is Ribonuclease P protein component of Lactobacillus johnsonii (strain CNCM I-12250 / La1 / NCC 533).